We begin with the raw amino-acid sequence, 118 residues long: Large ribosomal subunit protein bL20 (118 aa).

Belongs to the bacterial ribosomal protein bL20 family.

In terms of biological role, binds directly to 23S ribosomal RNA and is necessary for the in vitro assembly process of the 50S ribosomal subunit. It is not involved in the protein synthesizing functions of that subunit. This Pseudomonas entomophila (strain L48) protein is Large ribosomal subunit protein bL20.